The chain runs to 106 residues: Small ribosomal subunit protein uS17 (106 aa).

Belongs to the universal ribosomal protein uS17 family. As to quaternary structure, part of the 30S ribosomal subunit.

One of the primary rRNA binding proteins, it binds specifically to the 5'-end of 16S ribosomal RNA. The polypeptide is Small ribosomal subunit protein uS17 (Picrophilus torridus (strain ATCC 700027 / DSM 9790 / JCM 10055 / NBRC 100828 / KAW 2/3)).